Consider the following 199-residue polypeptide: Probable V-type proton ATPase 20 kDa proteolipid subunit (199 aa).

The Vacuolar segment spans residues 1 to 3 (MSL). The helical transmembrane segment at 4–24 (FSTSLWTTTVMSIIVGLYMLF) threads the bilayer. At 25–46 (HNSGESFDFGSFLLDTSPYTWG) the chain is on the cytoplasmic side. The chain crosses the membrane as a helical span at residues 47–67 (LLGIASCVAFGIIGAAWGIFI). At 68 to 86 (CGTSILGGAVKAPRIKTKN) the chain is on the vacuolar side. A helical membrane pass occupies residues 87–107 (LISIIFCEVVAIYSLIIAIVF). Residues 108-130 (SAKINDINPAGFYTKSHYYTGFA) are Cytoplasmic-facing. The chain crosses the membrane as a helical span at residues 131–151 (LFWGGITVGLCNLICGVCVGI). Residues 152 to 170 (TGSSAALADAQDASLFVKV) are Vacuolar-facing. Residues 171 to 191 (LVVEIFGSVLGLFGLIVGLLI) traverse the membrane as a helical segment. Residues 192–199 (GGKASDFS) are Cytoplasmic-facing.

It belongs to the V-ATPase proteolipid subunit family. As to quaternary structure, V-ATPase is a heteromultimeric enzyme composed of a peripheral catalytic V1 complex (components A to H) attached to an integral membrane V0 proton pore complex (components: a, c, c', c'', d, e, f and VOA1). The decameric c-ring forms the proton-conducting pore, and is composed of eight proteolipid subunits c, one subunit c' and one subunit c''.

Its subcellular location is the vacuole membrane. Its function is as follows. Proton-conducting pore forming subunit of the V0 complex of vacuolar(H+)-ATPase (V-ATPase), a multisubunit enzyme composed of a peripheral complex (V1) that hydrolyzes ATP and a membrane integral complex (V0) that translocates protons. V-ATPase is responsible for acidifying and maintaining the pH of intracellular compartments. The protein is Probable V-type proton ATPase 20 kDa proteolipid subunit (vma16) of Schizosaccharomyces pombe (strain 972 / ATCC 24843) (Fission yeast).